A 512-amino-acid polypeptide reads, in one-letter code: Lysine--tRNA ligase (512 aa).

Mg(2+) is bound by residues Glu421 and Glu428.

It belongs to the class-II aminoacyl-tRNA synthetase family. Homodimer. Requires Mg(2+) as cofactor.

The protein resides in the cytoplasm. The catalysed reaction is tRNA(Lys) + L-lysine + ATP = L-lysyl-tRNA(Lys) + AMP + diphosphate. The sequence is that of Lysine--tRNA ligase from Aeromonas salmonicida (strain A449).